The following is a 195-amino-acid chain: PABIR family member 1 (195 aa).

It belongs to the FAM122 family.

The chain is PABIR family member 1 from Homo sapiens (Human).